A 226-amino-acid chain; its full sequence is Phosphoribosylformylglycinamidine synthase subunit PurQ (226 aa).

Residues 2 to 226 form the Glutamine amidotransferase type-1 domain; it reads KIAVIVFPGS…LENGTVIAEG (225 aa). The Nucleophile role is filled by C86. Catalysis depends on residues H195 and E197.

As to quaternary structure, part of the FGAM synthase complex composed of 1 PurL, 1 PurQ and 2 PurS subunits.

The protein resides in the cytoplasm. The catalysed reaction is N(2)-formyl-N(1)-(5-phospho-beta-D-ribosyl)glycinamide + L-glutamine + ATP + H2O = 2-formamido-N(1)-(5-O-phospho-beta-D-ribosyl)acetamidine + L-glutamate + ADP + phosphate + H(+). It carries out the reaction L-glutamine + H2O = L-glutamate + NH4(+). Its pathway is purine metabolism; IMP biosynthesis via de novo pathway; 5-amino-1-(5-phospho-D-ribosyl)imidazole from N(2)-formyl-N(1)-(5-phospho-D-ribosyl)glycinamide: step 1/2. Part of the phosphoribosylformylglycinamidine synthase complex involved in the purines biosynthetic pathway. Catalyzes the ATP-dependent conversion of formylglycinamide ribonucleotide (FGAR) and glutamine to yield formylglycinamidine ribonucleotide (FGAM) and glutamate. The FGAM synthase complex is composed of three subunits. PurQ produces an ammonia molecule by converting glutamine to glutamate. PurL transfers the ammonia molecule to FGAR to form FGAM in an ATP-dependent manner. PurS interacts with PurQ and PurL and is thought to assist in the transfer of the ammonia molecule from PurQ to PurL. This chain is Phosphoribosylformylglycinamidine synthase subunit PurQ, found in Limosilactobacillus fermentum (strain NBRC 3956 / LMG 18251) (Lactobacillus fermentum).